A 446-amino-acid polypeptide reads, in one-letter code: C-type lectin domain family 18 member C (446 aa).

The first 26 residues, 1 to 26 (MLHPETSPGRGHLLAVLLALLGTAWA), serve as a signal peptide directing secretion. An SCP domain is found at 52–182 (LSLHNRLRSW…AAIEAFVCAY (131 aa)). Asparagine 144 carries N-linked (GlcNAc...) asparagine glycosylation. The 34-residue stretch at 228–261 (PRNPCRMSCQNHGRLNISTCHCHCPPGYTGRYCQ) folds into the EGF-like domain. Intrachain disulfides connect cysteine 236-cysteine 249, cysteine 251-cysteine 260, cysteine 327-cysteine 432, and cysteine 408-cysteine 424. The 128-residue stretch at 306-433 (IDGDCFMVSS…CKTRNRYICQ (128 aa)) folds into the C-type lectin domain.

As to expression, detected in peripheral blood cells.

The protein localises to the secreted. It is found in the endoplasmic reticulum. Its subcellular location is the golgi apparatus. The protein resides in the endosome. Functionally, binds polysaccharidesin a Ca(2+)-independent manner with a preferentially binding to fucoidan, beta-glucans and galactans. The polypeptide is C-type lectin domain family 18 member C (CLEC18C) (Homo sapiens (Human)).